We begin with the raw amino-acid sequence, 220 residues long: MRDIIDGFLRFQRDAYPARSQLFKSLATRQAPKALFIACSDSRVVPELLTQREPGELFVIRNAGNIVPGYGPQPGGVSASVEYAVAVLGVGDIVVCGHSDCGAMGAIASCACLDQLPAVAGWLHHAEAARAMNSAHEHASEAARLDALVRHNVIAQLANLRTHPCVARALEQGRLNLHGWVYDIESGRIDALDGASRRFVSLAEHPEVRAVGGEPGQAVA.

Zn(2+)-binding residues include Cys39, Asp41, His98, and Cys101.

Belongs to the beta-class carbonic anhydrase family. It depends on Zn(2+) as a cofactor.

It carries out the reaction hydrogencarbonate + H(+) = CO2 + H2O. The chain is Carbonic anhydrase (cynT) from Pseudomonas aeruginosa (strain ATCC 15692 / DSM 22644 / CIP 104116 / JCM 14847 / LMG 12228 / 1C / PRS 101 / PAO1).